A 533-amino-acid polypeptide reads, in one-letter code: MPNLDLSRYGITDVEEIVHNPSYDLLFEEETRDDLQGYEKGTVTDLGAVAVDTGIFTGRSPKDKYIVRDDTTRDTVWWADQGKNDNKPLSTETWNELKGLVTEQLSHKRLFVVDTYCGANEDTRLAVRFITEVAWQAHFVKNMFIRPSEEELENFEPDFVVMNGAKCINPKWQEQELNSENFVAFNLTEKIQLIGGTWYGGEMKKGMFSMMNYFLPLKGIASMHCSANVGQEGDVAVFFGLSGTGKTTLSTDPKRALIGDDEHGWDDDGVFNFEGGCYAKTINLSKEAEPDIYNAIRRDALLENVAVDDNGVVDFDDNSKTENTRVSYPIYHIDNIVKPVSKAGHAKKVIFLTADAFGVLPPVSKLTKEQAQYHFLSGFTAKLAGTERGVTEPTPTFSSCFGAAFLSLHPTQYAEVLVKRMEAAGAEAYLVNTGWNGTGKRISIKATRAIIDAILDGSIEDAEFVQLPHFNLAMPTELAGVEDSSILDPRKTYEDDGEWDVRAKDLAERFVANFEKFTDTDNGKALVAAGPQL.

Positions 59, 199, and 205 each coordinate substrate. ATP is bound by residues Lys205, His224, and 240–248; that span reads GLSGTGKTT. Mn(2+)-binding residues include Lys205 and His224. Mn(2+) is bound at residue Asp261. Residues Glu289, Arg325, 441–442, and Thr447 contribute to the ATP site; that span reads RI. Substrate is bound at residue Arg325.

It belongs to the phosphoenolpyruvate carboxykinase (ATP) family. Monomer. It depends on Mn(2+) as a cofactor.

The protein localises to the cytoplasm. It carries out the reaction oxaloacetate + ATP = phosphoenolpyruvate + ADP + CO2. It functions in the pathway carbohydrate biosynthesis; gluconeogenesis. Involved in the gluconeogenesis. Catalyzes the conversion of oxaloacetate (OAA) to phosphoenolpyruvate (PEP) through direct phosphoryl transfer between the nucleoside triphosphate and OAA. The chain is Phosphoenolpyruvate carboxykinase (ATP) from Idiomarina loihiensis (strain ATCC BAA-735 / DSM 15497 / L2-TR).